Consider the following 1976-residue polypeptide: Myosin-10 (1976 aa).

Arg18 carries the post-translational modification Omega-N-methylarginine. A Myosin N-terminal SH3-like domain is found at 31–81 (TAKKLVWIPSERHGFEAASIKEERGDEVLVELAENGKKAMVNKDDIQKMNP). Residues 85–783 (SKVEDMAELT…VLAHLEEERD (699 aa)) enclose the Myosin motor domain. 178-185 (GESGAGKT) contacts ATP. The residue at position 442 (Lys442) is an N6-acetyllysine. The segment at 661–683 (LTKLMATLRNTNPNFVRCIIPNH) is actin-binding. Residues 786–815 (ITDIIIFFQAVCRGYLARKAFAKKQQQLSA) form the IQ domain. A coiled-coil region spans residues 845–1976 (LQVTRQEEEL…INETQPPQSE (1132 aa)). Residues 1126 to 1149 (DFESEKASRNKAEKQKRDLSEELE) are disordered. Positions 1129–1149 (SEKASRNKAEKQKRDLSEELE) are enriched in basic and acidic residues. Ser1145 carries the post-translational modification Phosphoserine. Residues Lys1241, Lys1301, and Lys1645 each carry the N6-acetyllysine modification. 2 disordered regions span residues 1697-1718 (ASSE…DEIA) and 1874-1976 (KANA…PQSE). Residues 1698–1708 (SSERARRHAEQ) show a composition bias toward basic and acidic residues. Omega-N-methylarginine is present on Arg1930. A phosphoserine mark is found at Ser1935, Ser1937, Ser1938, and Ser1939. Arg1940 carries the post-translational modification Omega-N-methylarginine. Ser1952 and Ser1956 each carry phosphoserine. Thr1960 carries the post-translational modification Phosphothreonine. A compositionally biased stretch (polar residues) spans 1967–1976 (INETQPPQSE). The residue at position 1975 (Ser1975) is a Phosphoserine.

This sequence belongs to the TRAFAC class myosin-kinesin ATPase superfamily. Myosin family. Myosin is a hexameric protein that consists of 2 heavy chain subunits (MHC), 2 alkali light chain subunits (MLC) and 2 regulatory light chain subunits (MLC-2). Interacts with PLEKHG6. Interacts with ECPAS. Interacts with KIF26B. Interacts with LARP6. Interacts with MCC. Interacts with CFAP95. Phosphorylated by ABL2.

Its subcellular location is the cell projection. The protein localises to the lamellipodium. Functionally, cellular myosin that appears to play a role in cytokinesis, cell shape, and specialized functions such as secretion and capping. Involved with LARP6 in the stabilization of type I collagen mRNAs for CO1A1 and CO1A2. During cell spreading, plays an important role in cytoskeleton reorganization, focal contacts formation (in the central part but not the margins of spreading cells), and lamellipodial extension; this function is mechanically antagonized by MYH9. The chain is Myosin-10 (MYH10) from Bos taurus (Bovine).